A 182-amino-acid polypeptide reads, in one-letter code: UPF0397 protein SPG_0438 (182 aa).

Transmembrane regions (helical) follow at residues 10 to 30 (VVAVGIGAALFVVIGMINIPT), 46 to 66 (LLSIIFGPIIGLLVGLIGHAI), 73 to 93 (YGLWWTWIIASGLFGLVVGLF), 109 to 129 (ILIFNLIQLLANALVWGVLAP), and 148 to 168 (IVAGIANGVSVAIAGTLLLLA).

Belongs to the UPF0397 family.

Its subcellular location is the cell membrane. In Streptococcus pneumoniae serotype 19F (strain G54), this protein is UPF0397 protein SPG_0438.